A 316-amino-acid chain; its full sequence is Ornithine carbamoyltransferase (316 aa).

Carbamoyl phosphate is bound by residues 57-60, Gln84, Arg108, and 135-138; these read STRT and HPCQ. L-ornithine is bound by residues Asn166, Asp230, and 234 to 235; that span reads SM. Residues 269–270 and Arg297 each bind carbamoyl phosphate; that span reads CL.

It belongs to the aspartate/ornithine carbamoyltransferase superfamily. OTCase family.

Its subcellular location is the cytoplasm. The enzyme catalyses carbamoyl phosphate + L-ornithine = L-citrulline + phosphate + H(+). It functions in the pathway amino-acid degradation; L-arginine degradation via ADI pathway; carbamoyl phosphate from L-arginine: step 2/2. Functionally, reversibly catalyzes the transfer of the carbamoyl group from carbamoyl phosphate (CP) to the N(epsilon) atom of ornithine (ORN) to produce L-citrulline. This chain is Ornithine carbamoyltransferase, found in Bacillus anthracis (strain CDC 684 / NRRL 3495).